The primary structure comprises 289 residues: Protease HtpX homolog (289 aa).

The next 2 membrane-spanning stretches (helical) occupy residues 11–31 (AALFGVLWAVLLGLGAIIAAG) and 34–54 (STTPIWIMALIGVATTAYGYW). H138 contributes to the Zn(2+) binding site. Residue E139 is part of the active site. H142 is a Zn(2+) binding site. 2 consecutive transmembrane segments (helical) span residues 152–172 (SVVAAVAGVITSVGQMLLIFG) and 182–202 (LATIAMALLAPFAASLIQMAI). A Zn(2+)-binding site is contributed by E207.

The protein belongs to the peptidase M48B family. Zn(2+) serves as cofactor.

It localises to the cell membrane. The sequence is that of Protease HtpX homolog from Paenarthrobacter aurescens (strain TC1).